Reading from the N-terminus, the 86-residue chain is Large ribosomal subunit protein bL31B (86 aa).

This sequence belongs to the bacterial ribosomal protein bL31 family. Type B subfamily. As to quaternary structure, part of the 50S ribosomal subunit.

This Salmonella paratyphi A (strain ATCC 9150 / SARB42) protein is Large ribosomal subunit protein bL31B.